The following is a 496-amino-acid chain: 6-phosphogluconate dehydrogenase, decarboxylating (496 aa).

Residues 13 to 18 (GLDVSI), 24 to 26 (DNV), 68 to 70 (ITH), and Asn-96 contribute to the NADP(+) site. Substrate contacts are provided by residues Asn-96 and 122–124 (SGG). Lys-178 acts as the Proton acceptor in catalysis. Substrate is bound at residue 181–182 (HN). Glu-185 serves as the catalytic Proton donor. Residues Arg-300 and His-468 each coordinate substrate. Residues 476-496 (PGEDPGPVSKGPHHYEWRPAK) form a disordered region.

Belongs to the 6-phosphogluconate dehydrogenase family. In terms of assembly, homodimer.

The protein localises to the cytoplasm. It carries out the reaction 6-phospho-D-gluconate + NADP(+) = D-ribulose 5-phosphate + CO2 + NADPH. Its pathway is carbohydrate degradation; pentose phosphate pathway; D-ribulose 5-phosphate from D-glucose 6-phosphate (oxidative stage): step 3/3. Its function is as follows. Catalyzes the oxidative decarboxylation of 6-phosphogluconate to ribulose 5-phosphate and CO(2), with concomitant reduction of NADP to NADPH. This Emericella nidulans (strain FGSC A4 / ATCC 38163 / CBS 112.46 / NRRL 194 / M139) (Aspergillus nidulans) protein is 6-phosphogluconate dehydrogenase, decarboxylating.